A 459-amino-acid polypeptide reads, in one-letter code: Interleukin-7 receptor subunit alpha (459 aa).

Positions 1–20 (MMALGRAFAIVFCLIQAVSG) are cleaved as a signal peptide. Over 21-239 (ESGNAQDGDL…PEPKNQGGWD (219 aa)) the chain is Extracellular. The cysteines at positions 42 and 57 are disulfide-linked. N60 carries N-linked (GlcNAc...) asparagine glycosylation. 2 disulfides stabilise this stretch: C74–C82 and C108–C118. N-linked (GlcNAc...) asparagine glycosylation is found at N115 and N177. The Fibronectin type-III domain occupies 131–232 (APSDLKVVYR…PSSTFETPEP (102 aa)). A WSXWS motif motif is present at residues 218–222 (WSEWS). Residues 240–264 (PVLPSVTILSLFSVFLLVILAHVLW) traverse the membrane as a helical segment. The Cytoplasmic segment spans residues 265–459 (KKRIKPVVWP…VTMSSFYQNK (195 aa)). The short motif at 272–280 (VWPSLPDHK) is the Box 1 motif element. T282 bears the Phosphothreonine; by PKC mark. Disordered stretches follow at residues 337–365 (TQGH…RRES) and 378–413 (NAPP…NTNV). Residues 347–357 (ANRSPETSVSP) are compositionally biased toward polar residues. Basic and acidic residues predominate over residues 388 to 397 (PDYRDGDRNR).

It belongs to the type I cytokine receptor family. Type 4 subfamily. The IL7 receptor is a heterodimer of IL7R and IL2RG. The TSLP receptor is a heterodimer of CRLF2 and IL7R. Interacts with CD53. Post-translationally, N-glycosylated IL-7Ralpha binds IL7 300-fold more tightly than the unglycosylated form. Ubiquitinated by MARCHF8; leading to lysosomal degradation. Spleen, thymus and fetal liver.

The protein localises to the membrane. Its function is as follows. Receptor for interleukin-7. Also acts as a receptor for thymic stromal lymphopoietin (TSLP). This Mus musculus (Mouse) protein is Interleukin-7 receptor subunit alpha (Il7r).